The sequence spans 308 residues: Glutaminase (308 aa).

The substrate site is built by serine 66, asparagine 117, glutamate 161, asparagine 168, tyrosine 192, tyrosine 244, and valine 262.

Belongs to the glutaminase family. As to quaternary structure, homotetramer.

It carries out the reaction L-glutamine + H2O = L-glutamate + NH4(+). In Proteus mirabilis (strain HI4320), this protein is Glutaminase.